Here is a 388-residue protein sequence, read N- to C-terminus: Succinate--CoA ligase [ADP-forming] subunit beta (388 aa).

The 236-residue stretch at 9–244 folds into the ATP-grasp domain; it reads KEILRKFGVA…PDEEDPKETQ (236 aa). Residues Lys46, 53–55, Glu99, Cys102, and Glu107 each bind ATP; that span reads GRG. 2 residues coordinate Mg(2+): Asn199 and Asp213. Substrate is bound by residues Asn264 and 321 to 323; that span reads GIM.

Belongs to the succinate/malate CoA ligase beta subunit family. As to quaternary structure, heterotetramer of two alpha and two beta subunits. Mg(2+) is required as a cofactor.

The enzyme catalyses succinate + ATP + CoA = succinyl-CoA + ADP + phosphate. It carries out the reaction GTP + succinate + CoA = succinyl-CoA + GDP + phosphate. Its pathway is carbohydrate metabolism; tricarboxylic acid cycle; succinate from succinyl-CoA (ligase route): step 1/1. Succinyl-CoA synthetase functions in the citric acid cycle (TCA), coupling the hydrolysis of succinyl-CoA to the synthesis of either ATP or GTP and thus represents the only step of substrate-level phosphorylation in the TCA. The beta subunit provides nucleotide specificity of the enzyme and binds the substrate succinate, while the binding sites for coenzyme A and phosphate are found in the alpha subunit. In Anaeromyxobacter dehalogenans (strain 2CP-1 / ATCC BAA-258), this protein is Succinate--CoA ligase [ADP-forming] subunit beta.